A 262-amino-acid polypeptide reads, in one-letter code: MANKVKIGILNLMHDKLDTQSHFIKVLPNADLTFFYPRMHYQNRPIPPEVNMTSEPLDINRVSEFDGFIITGAPIDQIDFSKITYIEEIRYLLQALDNHKIQQLYFCWGAMAALNYFYGIKKKILAEKIFGVFPHLITEPHPLLSGLSQGFMAPHARYAEMDKKQIMQDERLAINAVDDNSHLFMVSAKDNPERNFIFSHIEYGKDSLRDEYNREINAHPERHYKKPINYSMSNPSFQWQDTQKIFFNNWLKKVKDNKLVLN.

The active-site Acyl-thioester intermediate is the Cys-107. Lys-128 contacts substrate. Residue His-200 is the Proton acceptor of the active site. The active site involves Glu-202. Residue Arg-214 participates in substrate binding.

It belongs to the MetA family.

It is found in the cytoplasm. It carries out the reaction L-serine + acetyl-CoA = O-acetyl-L-serine + CoA. The catalysed reaction is L-homoserine + acetyl-CoA = O-acetyl-L-homoserine + CoA. It participates in amino-acid biosynthesis; L-cysteine biosynthesis; L-cysteine from L-serine: step 1/2. In terms of biological role, transfers an acetyl group from acetyl-CoA to L-serine, forming acetyl-L-serine. In vitro, also has homoserine acetyl transferase activity. This chain is Serine O-acetyltransferase, found in Lactobacillus acidophilus.